A 90-amino-acid polypeptide reads, in one-letter code: Small ribosomal subunit protein bS18 (90 aa).

It belongs to the bacterial ribosomal protein bS18 family. Part of the 30S ribosomal subunit. Forms a tight heterodimer with protein bS6.

In terms of biological role, binds as a heterodimer with protein bS6 to the central domain of the 16S rRNA, where it helps stabilize the platform of the 30S subunit. This chain is Small ribosomal subunit protein bS18, found in Bacteroides thetaiotaomicron (strain ATCC 29148 / DSM 2079 / JCM 5827 / CCUG 10774 / NCTC 10582 / VPI-5482 / E50).